The following is a 221-amino-acid chain: Chalcone--flavanone isomerase (221 aa).

Substrate contacts are provided by Thr-52, Asn-117, and Ser-193.

Belongs to the chalcone isomerase family. As to expression, flowers.

The enzyme catalyses a chalcone = a flavanone.. The protein operates within secondary metabolite biosynthesis; flavonoid biosynthesis. Functionally, catalyzes the intramolecular cyclization of bicyclic chalcones into tricyclic (S)-flavanones. Responsible for the isomerization of 4,2',4',6'-tetrahydroxychalcone (also termed chalcone) into naringenin. In Gentiana triflora (Clustered gentian), this protein is Chalcone--flavanone isomerase (CHI).